A 284-amino-acid chain; its full sequence is Dihydropteroate synthase (284 aa).

The Pterin-binding domain occupies 6 to 265 (VQVIGVLNVT…DVRASVDALK (260 aa)). Mg(2+) is bound at residue Asn-13. (7,8-dihydropterin-6-yl)methyl diphosphate is bound by residues Thr-53, Asp-86, Asn-105, Asp-177, Lys-213, and 253 to 255 (RVH).

The protein belongs to the DHPS family. As to quaternary structure, homodimer. The cofactor is Mg(2+).

It catalyses the reaction (7,8-dihydropterin-6-yl)methyl diphosphate + 4-aminobenzoate = 7,8-dihydropteroate + diphosphate. It functions in the pathway cofactor biosynthesis; tetrahydrofolate biosynthesis; 7,8-dihydrofolate from 2-amino-4-hydroxy-6-hydroxymethyl-7,8-dihydropteridine diphosphate and 4-aminobenzoate: step 1/2. Its activity is regulated as follows. Is potently inhibited by the sulfone dapsone and the two sulfonamides sulfamethoxazole and sulfamethoxypyridazine, with Kis in the range of 12 to 32 nM. To a lesser extent, is also inhibited by p-aminosalicylate (PAS). Its function is as follows. Catalyzes the condensation of para-aminobenzoate (pABA) with 6-hydroxymethyl-7,8-dihydropterin diphosphate (DHPt-PP) to form 7,8-dihydropteroate, the immediate precursor of folate derivatives. This chain is Dihydropteroate synthase (folP1), found in Mycobacterium leprae (strain TN).